Here is a 297-residue protein sequence, read N- to C-terminus: UDP-N-acetylenolpyruvoylglucosamine reductase (297 aa).

In terms of domain architecture, FAD-binding PCMH-type spans 22 to 195 (RVGGPAQYYA…LAGRFRLHRA (174 aa)). Residue R169 is part of the active site. Catalysis depends on S223, which acts as the Proton donor. E293 is a catalytic residue.

This sequence belongs to the MurB family. It depends on FAD as a cofactor.

It is found in the cytoplasm. It catalyses the reaction UDP-N-acetyl-alpha-D-muramate + NADP(+) = UDP-N-acetyl-3-O-(1-carboxyvinyl)-alpha-D-glucosamine + NADPH + H(+). It participates in cell wall biogenesis; peptidoglycan biosynthesis. Functionally, cell wall formation. This Chloroflexus aggregans (strain MD-66 / DSM 9485) protein is UDP-N-acetylenolpyruvoylglucosamine reductase.